Here is an 85-residue protein sequence, read N- to C-terminus: Sec-independent protein translocase protein TatA (85 aa).

A helical transmembrane segment spans residues 1–21 (MGSFSIWHWLIVLLIIMMVFG). Residues 39–51 (FKEGMREGSEDKP) show a composition bias toward basic and acidic residues. The segment at 39-85 (FKEGMREGSEDKPAGSQQGQQAAGQPPRELHDSTTIDVEARDKSKQG) is disordered. The segment covering 52 to 65 (AGSQQGQQAAGQPP) has biased composition (low complexity). Residues 66 to 85 (RELHDSTTIDVEARDKSKQG) show a composition bias toward basic and acidic residues.

This sequence belongs to the TatA/E family. As to quaternary structure, the Tat system comprises two distinct complexes: a TatABC complex, containing multiple copies of TatA, TatB and TatC subunits, and a separate TatA complex, containing only TatA subunits. Substrates initially bind to the TatABC complex, which probably triggers association of the separate TatA complex to form the active translocon.

The protein resides in the cell inner membrane. Functionally, part of the twin-arginine translocation (Tat) system that transports large folded proteins containing a characteristic twin-arginine motif in their signal peptide across membranes. TatA could form the protein-conducting channel of the Tat system. This is Sec-independent protein translocase protein TatA from Ralstonia nicotianae (strain ATCC BAA-1114 / GMI1000) (Ralstonia solanacearum).